Here is a 491-residue protein sequence, read N- to C-terminus: Sterol 14-alpha demethylase (491 aa).

A helical transmembrane segment spans residues L20–V40. Residue C430 participates in heme binding.

It belongs to the cytochrome P450 family. The cofactor is heme.

It is found in the endoplasmic reticulum membrane. It carries out the reaction a 14alpha-methyl steroid + 3 reduced [NADPH--hemoprotein reductase] + 3 O2 = a Delta(14) steroid + formate + 3 oxidized [NADPH--hemoprotein reductase] + 4 H2O + 4 H(+). It catalyses the reaction a 14alpha-methyl steroid + reduced [NADPH--hemoprotein reductase] + O2 = a 14alpha-hydroxymethyl steroid + oxidized [NADPH--hemoprotein reductase] + H2O + H(+). The enzyme catalyses a 14alpha-hydroxymethyl steroid + reduced [NADPH--hemoprotein reductase] + O2 = a 14alpha-formyl steroid + oxidized [NADPH--hemoprotein reductase] + 2 H2O + H(+). The catalysed reaction is a 14alpha-formyl steroid + reduced [NADPH--hemoprotein reductase] + O2 = a Delta(14) steroid + formate + oxidized [NADPH--hemoprotein reductase] + H2O + 2 H(+). It carries out the reaction lanosterol + 3 reduced [NADPH--hemoprotein reductase] + 3 O2 = 4,4-dimethyl-5alpha-cholesta-8,14,24-trien-3beta-ol + formate + 3 oxidized [NADPH--hemoprotein reductase] + 4 H2O + 4 H(+). It catalyses the reaction lanosterol + reduced [NADPH--hemoprotein reductase] + O2 = 32-hydroxylanosterol + oxidized [NADPH--hemoprotein reductase] + H2O + H(+). The enzyme catalyses 32-hydroxylanosterol + reduced [NADPH--hemoprotein reductase] + O2 = 32-oxolanosterol + oxidized [NADPH--hemoprotein reductase] + 2 H2O + H(+). The catalysed reaction is 32-oxolanosterol + reduced [NADPH--hemoprotein reductase] + O2 = 4,4-dimethyl-5alpha-cholesta-8,14,24-trien-3beta-ol + formate + oxidized [NADPH--hemoprotein reductase] + H2O + 2 H(+). It carries out the reaction eburicol + 3 reduced [NADPH--hemoprotein reductase] + 3 O2 = 14-demethyleburicol + formate + 3 oxidized [NADPH--hemoprotein reductase] + 4 H2O + 4 H(+). It catalyses the reaction eburicol + reduced [NADPH--hemoprotein reductase] + O2 = 32-hydroxyeburicol + oxidized [NADPH--hemoprotein reductase] + H2O + H(+). The enzyme catalyses 32-hydroxyeburicol + reduced [NADPH--hemoprotein reductase] + O2 = 32-oxoeburicol + oxidized [NADPH--hemoprotein reductase] + 2 H2O + H(+). The catalysed reaction is 32-oxoeburicol + reduced [NADPH--hemoprotein reductase] + O2 = 14-demethyleburicol + formate + oxidized [NADPH--hemoprotein reductase] + H2O + 2 H(+). The protein operates within steroid biosynthesis; sterol biosynthesis. In terms of biological role, sterol 14alpha-demethylase, encoded by cyp51A, cyp51B and cyp51C, that plays a critical role in the third module of ergosterol biosynthesis pathway, being ergosterol the major sterol component in fungal membranes that participates in a variety of functions. The third module or late pathway involves the ergosterol synthesis itself through consecutive reactions that mainly occur in the endoplasmic reticulum (ER) membrane. In filamentous fungi, during the initial step of this module, lanosterol (lanosta-8,24-dien-3beta-ol) can be metabolized to eburicol. Sterol 14alpha-demethylase catalyzes the three-step oxidative removal of the 14alpha-methyl group (C-32) of both these sterols in the form of formate, and converts eburicol and lanosterol to 14-demethyleburicol (4,4,24-trimethylergosta-8,14,24(28)-trienol) and 4,4-dimethyl-5alpha-cholesta-8,14,24-trien-3beta-ol, respectively, which are further metabolized by other enzymes in the pathway to ergosterol. Can also use substrates not intrinsic to fungi, such as 24,25-dihydrolanosterol (DHL), producing 4,4'-dimethyl-8,14-cholestadien-3-beta-ol, but at lower rates than the endogenous substrates. As a target of azole drugs, plays a crucial role in azole susceptibility. The sequence is that of Sterol 14-alpha demethylase from Aspergillus flavus (strain ATCC 200026 / FGSC A1120 / IAM 13836 / NRRL 3357 / JCM 12722 / SRRC 167).